Reading from the N-terminus, the 407-residue chain is Aminoacylase-1 (407 aa).

A2 is modified (N-acetylalanine). Residue H80 coordinates Zn(2+). D82 is an active-site residue. D113 serves as a coordination point for Zn(2+). E147 acts as the Proton acceptor in catalysis. 3 residues coordinate Zn(2+): E148, E175, and H372.

This sequence belongs to the peptidase M20A family. Homodimer. Interacts with SPHK1. It depends on Zn(2+) as a cofactor.

It is found in the cytoplasm. It catalyses the reaction an N-acyl-L-amino acid + H2O = an L-alpha-amino acid + a carboxylate. The enzyme catalyses N-acetyl-L-methionine + H2O = L-methionine + acetate. It carries out the reaction N-acetyl-L-glutamine + H2O = L-glutamine + acetate. In terms of biological role, catalyzes the hydrolysis of N-acetylated amino acids to acetate and free amino acids. The chain is Aminoacylase-1 (ACY1) from Sus scrofa (Pig).